The sequence spans 143 residues: Large-conductance mechanosensitive channel (143 aa).

Helical transmembrane passes span 10–30 and 89–109; these read FAVK…GAFS and GSFI…FLMV.

It belongs to the MscL family. As to quaternary structure, homopentamer.

Its subcellular location is the cell inner membrane. Its function is as follows. Channel that opens in response to stretch forces in the membrane lipid bilayer. May participate in the regulation of osmotic pressure changes within the cell. The chain is Large-conductance mechanosensitive channel from Burkholderia vietnamiensis (strain G4 / LMG 22486) (Burkholderia cepacia (strain R1808)).